The following is a 470-amino-acid chain: Phosphoribosylamine--glycine ligase (470 aa).

Positions 115–354 (KDFLKRIGVP…MAEISMAVVE (240 aa)) constitute an ATP-grasp domain. Position 142–203 (142–203 (REKFNNGIVV…EERLRGIEVA (62 aa))) interacts with ATP. Mg(2+)-binding residues include E324 and N326.

Belongs to the GARS family. Mg(2+) serves as cofactor. Mn(2+) is required as a cofactor.

It carries out the reaction 5-phospho-beta-D-ribosylamine + glycine + ATP = N(1)-(5-phospho-beta-D-ribosyl)glycinamide + ADP + phosphate + H(+). The protein operates within purine metabolism; IMP biosynthesis via de novo pathway; N(1)-(5-phospho-D-ribosyl)glycinamide from 5-phospho-alpha-D-ribose 1-diphosphate: step 2/2. This chain is Phosphoribosylamine--glycine ligase (purD), found in Archaeoglobus fulgidus (strain ATCC 49558 / DSM 4304 / JCM 9628 / NBRC 100126 / VC-16).